Here is a 395-residue protein sequence, read N- to C-terminus: Innexin inx3 (395 aa).

At 1 to 37 (MAVFGMVSAVSGFIKIRYLLDKAVIDNMVFRCHYRIT) the chain is on the cytoplasmic side. A helical transmembrane segment spans residues 38 to 58 (TAILFTCCIIVTANNLIGDPI). Residues 59 to 114 (SCINDGAIPMHVINTFCWITYTYTIPGQQHRQIGTDVAGPGLGNEYGQEKRYHSYY) are Extracellular-facing. The helical transmembrane segment at 115–135 (QWVPFVLFFQGLMFYVPHWVW) threads the bilayer. The Cytoplasmic portion of the chain corresponds to 136-183 (KNMEDGKIRMITDGLRGMVSVPDDYRRDRQDRILKYFVNSLNTHNGYS). The chain crosses the membrane as a helical span at residues 184 to 204 (FAYFFCELLNFINVIVNIFMV). The Extracellular segment spans residues 205–272 (DKFLGGAFMS…VLALNILNEK (68 aa)). The chain crosses the membrane as a helical span at residues 273–293 (IYIFLWFWFIILATISGVAVL). Residues 294–395 (YSLVVIMMPT…TFGGGKETET (102 aa)) lie on the Cytoplasmic side of the membrane. Phosphoserine is present on residues S366 and S377. The residue at position 381 (Y381) is a Phosphotyrosine.

The protein belongs to the pannexin family. Heterooligomer of Inx2 (via cytoplasmic C-terminal region) and Inx3 (via cytoplasmic C-terminal region). As to expression, in ovary, expressed in nurse cells and follicle cells. Expressed in embryonic epithelial cells. Ubiquitously expressed in stage 5 embryos. Expressed in foregut and hindgut from stage 11-17 and in proventriculus, epidermis and CNS in stage 16 embryos (at protein level). Expressed in anterior and ventral regions in stage 8 embryos. Repeating epidermal pattern emerges at stage 11, refines to one or two cells at each side of the segment borders by stage 13. Expressed in the imaginal wing disk. In pupae, expressed in the CNS and in secondary and tertiary pigment cells of the retina.

The protein localises to the cell membrane. Its subcellular location is the cell junction. It is found in the gap junction. The protein resides in the cytoplasm. It localises to the lateral cell membrane. The protein localises to the apicolateral cell membrane. Functionally, structural components of the gap junctions. Essential for proper epithelial development of the epidermis. This chain is Innexin inx3 (Inx3), found in Drosophila melanogaster (Fruit fly).